A 348-amino-acid chain; its full sequence is CCN family member 2 (348 aa).

Positions 1 to 25 (MLASVAGPISLALVLLALCTRPAMG) are cleaved as a signal peptide. An IGFBP N-terminal domain is found at 26–97 (QDCSAQCQCA…NRKIGVCTAK (72 aa)). Disulfide bonds link cysteine 28/cysteine 53, cysteine 32/cysteine 55, cysteine 34/cysteine 56, cysteine 42/cysteine 59, cysteine 67/cysteine 81, and cysteine 73/cysteine 94. Positions 100–166 (APCVFGGSVY…GKCCEEWVCD (67 aa)) constitute a VWFC domain. A TSP type-1 domain is found at 197-242 (NCLVQTTEWSACSKTCGMGISTRVTNDNTFCRLEKQSRLCMVRPCE). A heparin-binding region spans residues 246–348 (EENIKKGKKC…YYRKMYGDMA (103 aa)). Cystine bridges form between cysteine 255-cysteine 292, cysteine 272-cysteine 306, cysteine 283-cysteine 322, cysteine 286-cysteine 324, and cysteine 291-cysteine 328. Positions 255–329 (CIRTPKIAKP…KTCACHYNCP (75 aa)) constitute a CTCK domain.

It belongs to the CCN family. Monomer. Interacts with TSKU. As to expression, testis, spleen, kidney, lung, heart, and brain (lowest level in testis and highest in lung).

It is found in the secreted. It localises to the extracellular space. The protein localises to the extracellular matrix. In terms of biological role, major connective tissue mitoattractant secreted by vascular endothelial cells. Promotes proliferation and differentiation of chondrocytes. Is involved in the stimulation of osteoblast differentiation and has a critical role in osteogenesis. Mediates heparin- and divalent cation-dependent cell adhesion in many cell types including fibroblasts, myofibroblasts, endothelial and epithelial cells. Enhances fibroblast growth factor-induced DNA synthesis. In Mus musculus (Mouse), this protein is CCN family member 2.